The chain runs to 379 residues: Transaminase htyB (379 aa).

Arg92 provides a ligand contact to pyridoxal 5'-phosphate. Residue Lys203 is modified to N6-(pyridoxal phosphate)lysine. Glu239 is a binding site for pyridoxal 5'-phosphate.

It belongs to the class-IV pyridoxal-phosphate-dependent aminotransferase family. The cofactor is pyridoxal 5'-phosphate.

It functions in the pathway antifungal biosynthesis. Transaminase; part of the gene cluster that mediates the de novo generation of L-homotyrosine from acetyl-CoA and 4-hydroxyphenyl-pyruvate. L-homotyrosine is a building block of echinocandin B, a fungal lipidated cyclic hexapeptide that acts as an antifungal agent. L-homotyrosine 4-hydroxyphenyl-pyruvate first undergoes an aldol-type condensation by htyA with the C-2 of acetyl-CoA followed by the release of CoA to form 2-(4-hydroxybenzyl)-malate. This is followed by isomerization of 2-(4-hydroxy-benzyl)-malate to 3-(4-hydroxybenzyl)-malate by htyD. Thereafter, 3-(4-hydroxybenzyl)-malate undergoes decarboxylation and oxidation to form 2-oxo-4-(4-hydroxybenzyl)butanoic acid, coupled to reduction of NAD(+) to NADH by htyC. The product then undergoes transamination catalyzed by htyB to form L-homotyrosine. The chain is Transaminase htyB from Aspergillus rugulosus (Emericella rugulosa).